We begin with the raw amino-acid sequence, 281 residues long: Nucleotide-binding protein Noc_2797 (281 aa).

8 to 15 (GVSGSGKS) contacts ATP. Residue 58-61 (DARN) participates in GTP binding.

Belongs to the RapZ-like family.

Its function is as follows. Displays ATPase and GTPase activities. In Nitrosococcus oceani (strain ATCC 19707 / BCRC 17464 / JCM 30415 / NCIMB 11848 / C-107), this protein is Nucleotide-binding protein Noc_2797.